The following is a 114-amino-acid chain: Flagellar hook-basal body complex protein FliE (114 aa).

It belongs to the FliE family.

The protein localises to the bacterial flagellum basal body. The polypeptide is Flagellar hook-basal body complex protein FliE (Desulfitobacterium hafniense (strain Y51)).